The primary structure comprises 726 residues: Catalase-peroxidase (726 aa).

The segment at 1–33 (MSTSDDIHNTTATGKCPFHQGGHDQSAGAGTTT) is disordered. Positions 105-226 (WHGAGTYRSI…LGATEMGLIY (122 aa)) form a cross-link, tryptophyl-tyrosyl-methioninium (Trp-Tyr) (with M-252). Histidine 106 acts as the Proton acceptor in catalysis. Positions 226–252 (YVNPEGPDHSGEPLSAAAAIRATFGNM) form a cross-link, tryptophyl-tyrosyl-methioninium (Tyr-Met) (with W-105). A heme b-binding site is contributed by histidine 267.

It belongs to the peroxidase family. Peroxidase/catalase subfamily. In terms of assembly, homodimer or homotetramer. The cofactor is heme b. In terms of processing, formation of the three residue Trp-Tyr-Met cross-link is important for the catalase, but not the peroxidase activity of the enzyme.

It catalyses the reaction H2O2 + AH2 = A + 2 H2O. It carries out the reaction 2 H2O2 = O2 + 2 H2O. Its function is as follows. Bifunctional enzyme with both catalase and broad-spectrum peroxidase activity. The polypeptide is Catalase-peroxidase (Shigella boydii serotype 4 (strain Sb227)).